We begin with the raw amino-acid sequence, 64 residues long: Translational regulator CsrA 1 (64 aa).

The protein belongs to the CsrA/RsmA family. In terms of assembly, homodimer; the beta-strands of each monomer intercalate to form a hydrophobic core, while the alpha-helices form wings that extend away from the core.

It localises to the cytoplasm. Its function is as follows. A key translational regulator that binds mRNA to regulate translation initiation and/or mRNA stability. Mediates global changes in gene expression, shifting from rapid growth to stress survival by linking envelope stress, the stringent response and the catabolite repression systems. Usually binds in the 5'-UTR; binding at or near the Shine-Dalgarno sequence prevents ribosome-binding, repressing translation, binding elsewhere in the 5'-UTR can activate translation and/or stabilize the mRNA. Its function is antagonized by small RNA(s). The chain is Translational regulator CsrA 1 from Pseudomonas syringae pv. tomato (strain ATCC BAA-871 / DC3000).